Reading from the N-terminus, the 344-residue chain is uncharacterized protein (344 aa).

Residues 221–249 (IQAQSMDEQKQIQEIYQNVEKLKEDVTKN) are a coiled coil.

The protein belongs to the IIV-6 287R family.

This is an uncharacterized protein from Aedes vexans (Inland floodwater mosquito).